We begin with the raw amino-acid sequence, 1264 residues long: Protein kibra (1264 aa).

Over residues 1 to 14 (MSNQQQQQLPRQLP) the composition is skewed to low complexity. A disordered region spans residues 1–40 (MSNQQQQQLPRQLPQPHPHHHHHHHQQQPGQHSEFPLPDG). Positions 17–26 (HPHHHHHHHQ) are enriched in basic residues. WW domains are found at residues 35-68 (FPLP…DPRD) and 82-115 (DELP…DPRQ). Coiled-coil stretches lie at residues 129–215 (LSAA…YTER), 258–288 (EKVR…AELL), and 319–445 (AEMA…RLKS). Residues 513 to 544 (PAVQLQQQHQLQQQTQPQPASEVSLSPRSSLS) are compositionally biased toward low complexity. Residues 513 to 545 (PAVQLQQQHQLQQQTQPQPASEVSLSPRSSLSI) are disordered. In terms of domain architecture, C2 spans 691 to 811 (ELAQVQIGLK…NPDDSTLKWY (121 aa)). Low complexity-rich tracts occupy residues 845 to 856 (IINNNNNNNNNN) and 864 to 876 (ESTI…STLT). Disordered regions lie at residues 845-880 (IINN…RNQA) and 1200-1254 (RNKN…RYDY).

This sequence belongs to the WWC family. KIBRA subfamily. Forms a complex with Mer and Ex. Interacts (via domain WW 1) with Ex (via RXPPXY motif). Interacts with Mer, Sav, Hpo and Wts.

The protein resides in the cytoplasm. It localises to the apical cell membrane. In terms of biological role, regulator of the Hippo/SWH (Sav/Wts/Hpo) signaling pathway, a signaling pathway that plays a pivotal role in organ size control and tumor suppression by restricting proliferation and promoting apoptosis. The core of this pathway is composed of a kinase cascade wherein Hippo (Hpo), in complex with its regulatory protein Salvador (Sav), phosphorylates and activates Warts (Wts) in complex with its regulatory protein Mats, which in turn phosphorylates and inactivates the Yorkie (Yki) oncoprotein. Kibra acts synergistically along with Ex and Mer to regulate the Hippo signaling pathway. The protein is Protein kibra (Kibra) of Drosophila mojavensis (Fruit fly).